Consider the following 118-residue polypeptide: Large ribosomal subunit protein bL20 (118 aa).

This sequence belongs to the bacterial ribosomal protein bL20 family.

Its function is as follows. Binds directly to 23S ribosomal RNA and is necessary for the in vitro assembly process of the 50S ribosomal subunit. It is not involved in the protein synthesizing functions of that subunit. In Thermosipho africanus (strain TCF52B), this protein is Large ribosomal subunit protein bL20.